The sequence spans 317 residues: tRNA(Ile)-lysidine synthase (317 aa).

30–35 (SGGSDS) contributes to the ATP binding site.

This sequence belongs to the tRNA(Ile)-lysidine synthase family.

The protein localises to the cytoplasm. It catalyses the reaction cytidine(34) in tRNA(Ile2) + L-lysine + ATP = lysidine(34) in tRNA(Ile2) + AMP + diphosphate + H(+). Its function is as follows. Ligates lysine onto the cytidine present at position 34 of the AUA codon-specific tRNA(Ile) that contains the anticodon CAU, in an ATP-dependent manner. Cytidine is converted to lysidine, thus changing the amino acid specificity of the tRNA from methionine to isoleucine. In Chlamydia felis (strain Fe/C-56) (Chlamydophila felis), this protein is tRNA(Ile)-lysidine synthase.